The chain runs to 446 residues: MKLFGTDGVRGKAGEKLSAQTAMRLAMAAGIYFRKYSATNVILVGKDTRKSGYMIETAIVAGLTAVGYNVLQIGPMPTPAIAFLTENMRCDAGIMISASHNPYYDNGIKFFDNCGDKIEENIEAEIEKIYYDDEMIANAQKTMTEIGANKRIDDVIGRYIVQIKNSFPKELTLKNLRVVLDVANGAAYKVAPTVFSELGADVIVINDEPNGSNINQSCGALHPEELANEVKRLRADIGFAFDGDADRLVVVDENGEVVHGDAVLGVLATYLNEKKALKGGAVVATVMSNAALEDYLKSHKIKLLRANVGDKYVLEMMKENGINFGGEQSGHVIFNDYAKTGDGLVTSMQVVAMMLKKGKKASEIFKAIKPYPQILLNLKITEKKPLEKIAGLKELEKNLEKDGIRSLFRYSGTENVIRLLLEGKNQNLVEKRMNEVEKFFIKALNA.

Ser-99 serves as the catalytic Phosphoserine intermediate. Residues Ser-99, Asp-242, Asp-244, and Asp-246 each contribute to the Mg(2+) site. Ser-99 bears the Phosphoserine mark.

It belongs to the phosphohexose mutase family. Mg(2+) serves as cofactor. In terms of processing, activated by phosphorylation.

It carries out the reaction alpha-D-glucosamine 1-phosphate = D-glucosamine 6-phosphate. Its function is as follows. Catalyzes the conversion of glucosamine-6-phosphate to glucosamine-1-phosphate. The protein is Phosphoglucosamine mutase of Campylobacter curvus (strain 525.92).